A 354-amino-acid polypeptide reads, in one-letter code: MASYDKISDGWYRVCPKRSSNRALITVKLPFSTLFRLKPMTDITPFANRLGKNIKHLMKWAKRNGIEAWRIYDRDIPQFPFAADVYGDRIHLQEYDTGWLMRPEEYEAWLAEVLEAVAFVTGFAPEQIRLKRRERQKGLQQYEKTGKAGDDFVITENGRKFWVNLDKYLDTGLFLDHRNTRKKVGETAAGKRFLNLFSYTGSFTVYAATGGAASSETVDLSNTYLDWAKRNFELNGIDTERHKIVRADVFQYLQTAYGEGRRFDLIVMDPPSFSNSKKMSDILDIQRDHKKLIDGAVKLLASDGILYFSNNLRSFVLDDLVSEQYAVKDISKQSVPEDFRNKKIHRCWEIRHKS.

The protein belongs to the methyltransferase superfamily.

The protein resides in the cytoplasm. It carries out the reaction guanosine(2069) in 23S rRNA + S-adenosyl-L-methionine = N(2)-methylguanosine(2069) in 23S rRNA + S-adenosyl-L-homocysteine + H(+). Its function is as follows. Specifically methylates the guanine in position 2069 (m7G2069) of 23S rRNA. The polypeptide is Ribosomal RNA large subunit methyltransferase K (rlmK) (Neisseria meningitidis serogroup B (strain ATCC BAA-335 / MC58)).